Here is a 163-residue protein sequence, read N- to C-terminus: 3-hydroxyacyl-[acyl-carrier-protein] dehydratase FabZ (163 aa).

H58 is a catalytic residue.

Belongs to the thioester dehydratase family. FabZ subfamily.

Its subcellular location is the cytoplasm. It catalyses the reaction a (3R)-hydroxyacyl-[ACP] = a (2E)-enoyl-[ACP] + H2O. Involved in unsaturated fatty acids biosynthesis. Catalyzes the dehydration of short chain beta-hydroxyacyl-ACPs and long chain saturated and unsaturated beta-hydroxyacyl-ACPs. This is 3-hydroxyacyl-[acyl-carrier-protein] dehydratase FabZ from Francisella philomiragia subsp. philomiragia (strain ATCC 25017 / CCUG 19701 / FSC 153 / O#319-036).